The sequence spans 359 residues: Pyruvate dehydrogenase E1 component subunit beta, mitochondrial (359 aa).

The N-terminal 30 residues, 1-30 (MAAVSGLVRRPLREVSRLLKRRFHWTAPAA), are a transit peptide targeting the mitochondrion. Tyr-67 is modified (phosphotyrosine). Residue Glu-89 coordinates thiamine diphosphate. Positions 142, 190, 191, 193, and 195 each coordinate K(+). Residue Lys-354 is modified to N6-acetyllysine.

Heterotetramer of two PDHA1 and two PDHB subunits. The heterotetramer interacts with DLAT, and is part of the multimeric pyruvate dehydrogenase complex that contains multiple copies of pyruvate dehydrogenase (E1), dihydrolipoamide acetyltransferase (DLAT, E2) and lipoamide dehydrogenase (DLD, E3). These subunits are bound to an inner core composed of about 48 DLAT and 12 PDHX molecules. Interacts with DLAT. Thiamine diphosphate is required as a cofactor.

The protein resides in the mitochondrion matrix. It carries out the reaction N(6)-[(R)-lipoyl]-L-lysyl-[protein] + pyruvate + H(+) = N(6)-[(R)-S(8)-acetyldihydrolipoyl]-L-lysyl-[protein] + CO2. Functionally, the pyruvate dehydrogenase complex catalyzes the overall conversion of pyruvate to acetyl-CoA and CO(2), and thereby links the glycolytic pathway to the tricarboxylic cycle. The polypeptide is Pyruvate dehydrogenase E1 component subunit beta, mitochondrial (PDHB) (Pongo abelii (Sumatran orangutan)).